Here is a 132-residue protein sequence, read N- to C-terminus: Hydrogenase maturation factor HypA (132 aa).

H2 contacts Ni(2+). Zn(2+)-binding residues include C74, C77, C91, and C94.

It belongs to the HypA/HybF family.

Its function is as follows. Involved in the maturation of [NiFe] hydrogenases. Required for nickel insertion into the metal center of the hydrogenase. The polypeptide is Hydrogenase maturation factor HypA (Synechococcus sp. (strain JA-2-3B'a(2-13)) (Cyanobacteria bacterium Yellowstone B-Prime)).